The chain runs to 208 residues: CASP-like protein 2A1 (208 aa).

The Cytoplasmic segment spans residues 1-36; sequence MSKMAEQKAAAVDGLGGAGAADAAPAGEAAAARVRP. The helical transmembrane segment at 37-57 threads the bilayer; it reads VETLLRAAPLGLCVAAMTVML. Residues 58-78 lie on the Extracellular side of the membrane; it reads RDQQSNEYGTVAYSDLGGFKY. The helical transmembrane segment at 79-99 threads the bilayer; it reads LVYANGLCAAYSLVSAFYTAV. At 100–108 the chain is on the cytoplasmic side; it reads PRPATVSRS. A helical transmembrane segment spans residues 109-129; that stretch reads WVVFLLDQVFTYLILAAGAAA. Over 130 to 161 the chain is Extracellular; that stretch reads AELLYLAYNGDKEVTWSEACGVFGSFCRQART. A helical transmembrane segment spans residues 162 to 182; the sequence is SVAITFGTVLCFILLSLISSY. Topologically, residues 183 to 208 are cytoplasmic; sequence RLFSAYEAPPSSALGSKGVEIAAYPR.

This sequence belongs to the Casparian strip membrane proteins (CASP) family. As to quaternary structure, homodimer and heterodimers.

It localises to the cell membrane. In Sorghum bicolor (Sorghum), this protein is CASP-like protein 2A1.